A 315-amino-acid chain; its full sequence is NAD(P)H-dependent anabolic L-arginine dehydrogenase DauB (315 aa).

It belongs to the ornithine cyclodeaminase/mu-crystallin family.

The enzyme catalyses L-arginine + NAD(+) + H2O = 5-guanidino-2-oxopentanoate + NH4(+) + NADH + H(+). It carries out the reaction L-arginine + NADP(+) + H2O = 5-guanidino-2-oxopentanoate + NH4(+) + NADPH + H(+). Functionally, involved in the anabolism of D-lysine and D-arginine. Under aerobic conditions, the arginine succinyltransferase (AST) and arginine transaminase (ATA) pathways are 2 major routes for L-arginine utilization as the sole source of carbon and nitrogen. The D-to-L racemization of arginine by DauA and DauB is necessary, before to be channeled into the AST and/or ATA pathways. DauB catalyzes the synthesis of L-arginine from 2-ketoarginine (2-KA) and ammonium. In Pseudomonas aeruginosa (strain ATCC 15692 / DSM 22644 / CIP 104116 / JCM 14847 / LMG 12228 / 1C / PRS 101 / PAO1), this protein is NAD(P)H-dependent anabolic L-arginine dehydrogenase DauB.